We begin with the raw amino-acid sequence, 124 residues long: U13-hexatoxin-Mg1a (124 aa).

Positions 1–17 (MKLSALVFVASVMLVAA) are cleaved as a signal peptide. A propeptide spanning residues 18–52 (SPVKDVEEPVETHLAADLKTIEELAKYEEAAVQKR) is cleaved from the precursor. 4 disulfide bridges follow: Cys-54–Cys-72, Cys-65–Cys-78, Cys-69–Cys-116, and Cys-71–Cys-87.

In terms of tissue distribution, expressed by the venom gland.

The protein resides in the secreted. No toxicity is observed upon intracranial injection into mice and intrathorax injection into crickets. In Macrothele gigas (Japanese funnel web spider), this protein is U13-hexatoxin-Mg1a.